The primary structure comprises 223 residues: MSDICDANKLKYRFRGYFPVVIDVETAGFNSQTDALLEIAVTLLKMDNEGVIGIDKTLHFHIEPFEGANLEPEALAFNGIDPTNPLRGAVSEKEAFLEIFKAVKKAQKASDCHRSIIVAHNAAFDHGFVSKAIERCDLKRSPFHPFATFDTATLAGLAIGHTVLAKACIMAGIPFDNKEAHSALYDTERTAELFCHIVNRWKSLGGWPLLAVDEQDAQSGTEA.

Positions 20 to 194 (VVIDVETAGF…YDTERTAELF (175 aa)) constitute an Exonuclease domain. 4 residues coordinate Mg(2+): Asp-23, Glu-25, His-181, and Asp-186. His-181 acts as the Proton donor/acceptor in catalysis.

It belongs to the RNase T family. In terms of assembly, homodimer. Requires Mg(2+) as cofactor.

In terms of biological role, trims short 3' overhangs of a variety of RNA species, leaving a one or two nucleotide 3' overhang. Responsible for the end-turnover of tRNA: specifically removes the terminal AMP residue from uncharged tRNA (tRNA-C-C-A). Also appears to be involved in tRNA biosynthesis. The protein is Ribonuclease T of Shewanella baltica (strain OS185).